The primary structure comprises 106 residues: MQFAIYAAAALFEIAGCFAFWAWLKLDKSPLWLAPGMVCLALFAYLLTLIESNVAGRAYAAYGGIYIIASILWIWFAEGARPDRWDVVGACTAFAGTCIILFAPRS.

The next 4 helical transmembrane spans lie at 3-23, 30-50, 60-80, and 84-104; these read FAIYAAAALFEIAGCFAFWAW, PLWLAPGMVCLALFAYLLTLI, AAYGGIYIIASILWIWFAEGA, and RWDVVGACTAFAGTCIILFAP.

This sequence belongs to the UPF0060 family.

It localises to the cell inner membrane. This Brucella anthropi (strain ATCC 49188 / DSM 6882 / CCUG 24695 / JCM 21032 / LMG 3331 / NBRC 15819 / NCTC 12168 / Alc 37) (Ochrobactrum anthropi) protein is UPF0060 membrane protein Oant_2511.